Consider the following 1388-residue polypeptide: Rho-associated protein kinase 2 (1388 aa).

The disordered stretch occupies residues 1-27; that stretch reads MSRPPPTGKMPGAPETAPGDGAGASRQ. The 263-residue stretch at 92–354 folds into the Protein kinase domain; that stretch reads YDVVKVIGRG…VEEIRQHPFF (263 aa). ATP contacts are provided by residues 98–106 and lysine 121; that span reads IGRGAFGEV. Residue aspartate 214 is the Proton acceptor of the active site. Positions 357-425 constitute an AGC-kinase C-terminal domain; it reads DQWHWDNIRE…YRENLLLSDS (69 aa). Residues 363 to 784 are interaction with PPP1R12A; that stretch reads NIRETAAPVV…INELLKQKDV (422 aa). Residues 373 to 420 are interaction with NPM1; sequence PELSSDIDSSNFDDIEDDKGDVETFPIPKAFVGNQLPFIGFTYYRENL. Position 414 is a phosphothreonine; by ROCK2 (threonine 414). 2 coiled-coil regions span residues 429–1024 and 1053–1131; these read RETD…EKQL and DTDV…IGLD. Positions 497–573 constitute an REM-1 domain; the sequence is ALRQLEREKA…LDETNALLRT (77 aa). At tyrosine 722 the chain carries Phosphotyrosine; by SRC. The RhoBD domain occupies 979-1047; it reads TSDVANLANE…LAEIMNRKEP (69 aa). Residues 979-1047 are RHOA binding; that stretch reads TSDVANLANE…LAEIMNRKEP (69 aa). Serine 1137 is modified (phosphoserine). In terms of domain architecture, PH spans 1150–1349; it reads ESRLEGWLSL…WVSRLVKKIP (200 aa). Threonine 1212 is modified (phosphothreonine). A Phorbol-ester/DAG-type zinc finger spans residues 1260–1315; that stretch reads GHEFIPTLYHFPTNCEACMKPLWHMFKPPPALECRRCHIKCHKDHMDKKEEIIAPC. Residues 1345-1388 form a disordered region; it reads VKKIPKKPPAPDPFARSSPRTSMKIQQNQSIRRPSRQLAPNKPS. 2 positions are modified to phosphoserine: serine 1362 and serine 1374. Positions 1362–1376 are enriched in polar residues; sequence SPRTSMKIQQNQSIR.

This sequence belongs to the protein kinase superfamily. AGC Ser/Thr protein kinase family. In terms of assembly, homodimer. Interacts with IRS1. Interacts with RAF1. Interacts with RHOA (activated by GTP), RHOB and RHOC. Interacts with PPP1R12A. Interacts with EP300. Interacts with CHORDC1. Interacts with BRCA2. Interacts with NPM1; this interaction enhances ROCK2 activity. Interacts with SORL1. Interacts with PJVK. Requires Mg(2+) as cofactor. In terms of processing, phosphorylation at Tyr-722 reduces its binding to RHOA and is crucial for focal adhesion dynamics. Dephosphorylation by PTPN11 stimulates its RHOA binding activity. Post-translationally, cleaved by granzyme B during apoptosis. This leads to constitutive activation of the kinase and membrane blebbing. As to expression, expressed in the brain (at protein level).

Its subcellular location is the cytoplasm. It localises to the cell membrane. The protein localises to the nucleus. It is found in the cytoskeleton. The protein resides in the microtubule organizing center. Its subcellular location is the centrosome. The catalysed reaction is L-seryl-[protein] + ATP = O-phospho-L-seryl-[protein] + ADP + H(+). The enzyme catalyses L-threonyl-[protein] + ATP = O-phospho-L-threonyl-[protein] + ADP + H(+). Activated by RHOA binding. Inhibited by Y-27632. Its function is as follows. Protein kinase which is a key regulator of actin cytoskeleton and cell polarity. Involved in regulation of smooth muscle contraction, actin cytoskeleton organization, stress fiber and focal adhesion formation, neurite retraction, cell adhesion and motility via phosphorylation of ADD1, BRCA2, CNN1, EZR, DPYSL2, EP300, MSN, MYL9/MLC2, NPM1, RDX, PPP1R12A and VIM. Phosphorylates SORL1 and IRF4. Acts as a negative regulator of VEGF-induced angiogenic endothelial cell activation. Positively regulates the activation of p42/MAPK1-p44/MAPK3 and of p90RSK/RPS6KA1 during myogenic differentiation. Plays an important role in the timely initiation of centrosome duplication. Inhibits keratinocyte terminal differentiation. May regulate closure of the eyelids and ventral body wall through organization of actomyosin bundles. Plays a critical role in the regulation of spine and synaptic properties in the hippocampus. Plays an important role in generating the circadian rhythm of the aortic myofilament Ca(2+) sensitivity and vascular contractility by modulating the myosin light chain phosphorylation. The protein is Rho-associated protein kinase 2 (ROCK2) of Homo sapiens (Human).